Reading from the N-terminus, the 702-residue chain is Ribosomal RNA large subunit methyltransferase K/L (702 aa).

Residues 43 to 154 (LIYQSLMWSR…KETASIALDL (112 aa)) enclose the THUMP domain.

This sequence belongs to the methyltransferase superfamily. RlmKL family.

Its subcellular location is the cytoplasm. It catalyses the reaction guanosine(2445) in 23S rRNA + S-adenosyl-L-methionine = N(2)-methylguanosine(2445) in 23S rRNA + S-adenosyl-L-homocysteine + H(+). The catalysed reaction is guanosine(2069) in 23S rRNA + S-adenosyl-L-methionine = N(2)-methylguanosine(2069) in 23S rRNA + S-adenosyl-L-homocysteine + H(+). Its function is as follows. Specifically methylates the guanine in position 2445 (m2G2445) and the guanine in position 2069 (m7G2069) of 23S rRNA. The sequence is that of Ribosomal RNA large subunit methyltransferase K/L from Salmonella paratyphi B (strain ATCC BAA-1250 / SPB7).